Consider the following 515-residue polypeptide: RNA-binding region-containing protein 3 (515 aa).

A disordered region spans residues 1–26 (MAVPEPSMPLSRGGPGSASLSPPRGD). S21 is subject to Phosphoserine. Positions 27 to 102 (RTLLVRHLPA…HTLVVEFAKE (76 aa)) constitute an RRM 1 domain. Disordered stretches follow at residues 107 to 133 (HSSCPASNAEKKKRLDDTVENDKEKKE), 215 to 254 (LHAPLPPTSPQPPEEPPLPDEDEDLSSKESEYESSDEEDR), and 337 to 369 (ETEQNNEEKNSDSPDTGLDDSNTGFGKLFPKPN). S108 carries the phosphoserine modification. Residues 115–133 (AEKKKRLDDTVENDKEKKE) are compositionally biased toward basic and acidic residues. Residues 218 to 230 (PLPPTSPQPPEEP) show a composition bias toward pro residues. Positions 337 to 348 (ETEQNNEEKNSD) are enriched in basic and acidic residues. S349 is modified (phosphoserine). Residues 419 to 502 (CRIYVKNLAR…KPMVVQFARS (84 aa)) enclose the RRM 2 domain.

Component of the U11/U12 snRNPs that are part of the U12-type spliceosome. Found in a complex with m(7)G-capped U12 snRNA. Interacts with PDCD7.

Its subcellular location is the nucleus. Participates in pre-mRNA U12-dependent splicing, performed by the minor spliceosome which removes U12-type introns. U12-type introns comprises less than 1% of all non-coding sequences. Binds to the 3'-stem-loop of m(7)G-capped U12 snRNA. The polypeptide is RNA-binding region-containing protein 3 (Rnpc3) (Rattus norvegicus (Rat)).